The sequence spans 397 residues: Oxygen-dependent coproporphyrinogen-III oxidase, chloroplastic (397 aa).

The interval Glu76 to Glu95 is disordered. Over residues Met79–Val90 the composition is skewed to polar residues. An important for dimerization region spans residues Val135–Lys144. Residue Ser185 participates in substrate binding. The active-site Proton donor is His199. Residues Asn201–Arg203 and Gly355–Ser360 contribute to the substrate site. The interval Tyr337–Glu372 is important for dimerization.

This sequence belongs to the aerobic coproporphyrinogen-III oxidase family. As to quaternary structure, homodimer.

The protein resides in the plastid. It is found in the chloroplast. It carries out the reaction coproporphyrinogen III + O2 + 2 H(+) = protoporphyrinogen IX + 2 CO2 + 2 H2O. It functions in the pathway porphyrin-containing compound metabolism; protoporphyrin-IX biosynthesis; protoporphyrinogen-IX from coproporphyrinogen-III (O2 route): step 1/1. Involved in the heme and chlorophyll biosynthesis. Catalyzes the aerobic oxidative decarboxylation of propionate groups of rings A and B of coproporphyrinogen-III to yield the vinyl groups in protoporphyrinogen-IX. This is Oxygen-dependent coproporphyrinogen-III oxidase, chloroplastic (CPX) from Nicotiana tabacum (Common tobacco).